We begin with the raw amino-acid sequence, 785 residues long: Sexual differentiation process protein isp4 (785 aa).

A disordered region spans residues 1–28 (MIGSINESPIEEHMNDSPSTKEKADSVD). The segment covering 10 to 26 (IEEHMNDSPSTKEKADS) has biased composition (basic and acidic residues). 16 consecutive transmembrane segments (helical) span residues 94–114 (MWTI…FFSL), 121–141 (LSVL…DLIF), 167–187 (LIVV…IILA), 196–216 (FGFG…YGLA), 264–284 (FFLY…YIFQ), 339–359 (LMNI…ALNF), 413–433 (ALAF…VILY), 461–481 (VPFY…MGTI), 490–510 (WWVI…IGIV), 512–532 (AITN…GYMY), 537–557 (LAMM…LAFA), 572–592 (IMFY…IGVL), 611–631 (YTCP…VIGP), 642–662 (TGLQ…WALW), 683–703 (GYIP…GLFF), and 732–752 (LSVI…PDWW).

This sequence belongs to the oligopeptide OPT transporter family.

It is found in the endoplasmic reticulum membrane. This Schizosaccharomyces pombe (strain 972 / ATCC 24843) (Fission yeast) protein is Sexual differentiation process protein isp4 (isp4).